Reading from the N-terminus, the 541-residue chain is Putative transferase YhbX (541 aa).

Over 1-60 the chain is Periplasmic; it reads MTVFNKFARSFKSHWLLYLSVIVFGITNLVASSGAHMVQRLLFFVLTILVVKRISSLPLR. A helical membrane pass occupies residues 61-81; the sequence is LLVAAPFVLLTAADMSISLYS. Over 82–110 the chain is Cytoplasmic; sequence WCTFGTTFNDGFAISVLQSDPDEVAKMLG. A helical transmembrane segment spans residues 111–131; sequence MYSPYLCAFAFLSLLFLAVII. Over 132–141 the chain is Periplasmic; that stretch reads KYDVSLPTKK. A helical membrane pass occupies residues 142–162; sequence VTGILLLIVISGSLFSACQFA. At 163–264 the chain is on the cytoplasmic side; the sequence is YKDAKNKNAF…RKQIKLFNQA (102 aa). A helical membrane pass occupies residues 265–285; sequence ISGAPYTALSVPLSLTADSVL. Residues 286 to 541 are Periplasmic-facing; the sequence is SHDIHNYPDN…QGNPTPEGQG (256 aa).

It belongs to the phosphoethanolamine transferase family.

The protein localises to the cell inner membrane. In terms of biological role, there are several lipid A forms in this strain, including a phosphoethanolamine (1-O-P-pEtN) form; overexpression of this gene does not lead to higher levels of the 1-O-P-pEtN form of lipid A. This chain is Putative transferase YhbX (yhbX), found in Escherichia coli O157:H7.